Here is a 300-residue protein sequence, read N- to C-terminus: uncharacterized protein (300 aa).

Residues 1–20 (MRLLISCILILSILVNFISG) form the signal peptide. Over 21–279 (HAVLVAPTPF…PCSIYGDGNG (259 aa)) the chain is Extracellular. Asn56, Asn217, and Asn278 each carry an N-linked (GlcNAc...) asparagine glycan. Residues 280–300 (SNLIIIPTLLIISILSLILMF) traverse the membrane as a helical segment.

It localises to the membrane. This is an uncharacterized protein from Dictyostelium discoideum (Social amoeba).